The following is a 441-amino-acid chain: GTPase Der (441 aa).

EngA-type G domains lie at 2-164 and 173-343; these read HKVA…PADD and IRIS…DKWQ. GTP-binding positions include 8 to 15, 55 to 59, 116 to 119, 179 to 186, 226 to 230, and 288 to 291; these read GRPNVGKS, DTGGL, NKID, DTAGI, and NKWD.

Belongs to the TRAFAC class TrmE-Era-EngA-EngB-Septin-like GTPase superfamily. EngA (Der) GTPase family. As to quaternary structure, associates with the 50S ribosomal subunit.

In terms of biological role, GTPase that plays an essential role in the late steps of ribosome biogenesis. The chain is GTPase Der from Deinococcus deserti (strain DSM 17065 / CIP 109153 / LMG 22923 / VCD115).